Here is a 985-residue protein sequence, read N- to C-terminus: Ras and Rab interactor 3 (985 aa).

Residues 1-24 (MIRHAGAPARGDPTGPVPVVGKGE) are disordered. In terms of domain architecture, SH2 spans 63 to 158 (WLQLSLGQAE…LLPFTLRLPQ (96 aa)). 3 disordered regions span residues 183-202 (SLNP…DRAP), 251-293 (QPPL…QPCS), and 315-531 (PPVP…KGSL). Over residues 189–201 (ERGKPAEPPRDRA) the composition is skewed to basic and acidic residues. 2 stretches are compositionally biased toward pro residues: residues 278–288 (RRPPPPPPVLP) and 315–336 (PPVP…PNQP). The segment covering 424–442 (DTPRESTEQGQDTEVKASD) has biased composition (basic and acidic residues). Residues 587–732 (FSSMFHAFLS…TTTDLGVTTS (146 aa)) are interaction with RAB5B. The VPS9 domain occupies 703–846 (HSKDGSLQQL…IKSYDKITVT (144 aa)). Residues 877–963 (QDFICVSYLE…RDFHFVYRPL (87 aa)) enclose the Ras-associating domain.

The protein belongs to the RIN (Ras interaction/interference) family. Interacts with CD2AP, RAB5B, RAB31 and BIN1. In terms of tissue distribution, widely expressed.

The protein localises to the cytoplasm. It is found in the cytoplasmic vesicle. Its subcellular location is the early endosome. Its function is as follows. Ras effector protein that functions as a guanine nucleotide exchange (GEF) for RAB5B and RAB31, by exchanging bound GDP for free GTP. Required for normal RAB31 function. The protein is Ras and Rab interactor 3 (RIN3) of Homo sapiens (Human).